The chain runs to 237 residues: Ribonuclease PH (237 aa).

Phosphate is bound by residues arginine 86 and 124–126 (GTR).

The protein belongs to the RNase PH family. In terms of assembly, homohexameric ring arranged as a trimer of dimers.

It catalyses the reaction tRNA(n+1) + phosphate = tRNA(n) + a ribonucleoside 5'-diphosphate. Functionally, phosphorolytic 3'-5' exoribonuclease that plays an important role in tRNA 3'-end maturation. Removes nucleotide residues following the 3'-CCA terminus of tRNAs; can also add nucleotides to the ends of RNA molecules by using nucleoside diphosphates as substrates, but this may not be physiologically important. Probably plays a role in initiation of 16S rRNA degradation (leading to ribosome degradation) during starvation. This Idiomarina loihiensis (strain ATCC BAA-735 / DSM 15497 / L2-TR) protein is Ribonuclease PH.